The following is a 930-amino-acid chain: MKLKDTLNLGKTEFPMRAGLPTKEPVWQKEWEDAKLYQRRQELNQGKPHFTLHDGPPYANGNIHVGHAMNKISKDIIVRSKSMSGFYAPFIPGWDTHGLPIEQVLSKQGVKRKEMDLVEYLKLCREYALSQVDKQREDFKRLGVSGDWENPYVTLTPDYEAAQIRVFGEMANKGYIYRGAKPVYWSWSSESALAEAEIEYHDLVSTSLYYANKVKDGKGVLDTDTYIVVWTTTPFTITASRGLTVGADIDYVLVQPAGEARKFVVAAELLTSLSEKFGWADVQVLETYRGQELNHIVTEHPWDTAVEELVILGDHVTTDSGTGIVHTAPGFGEDDYNVGIANNLEVAVTVDERGIMMKNAGPEFEGQFYEKVVPTVIEKLGNLLLAQEEISHSYPFDWRTKKPIIWRAVPQWFASVSKFRQEILDEIEKVKFHSEWGKVRLYNMIRDRGDWVISRQRAWGVPLPIFYAEDGTAIMVAETIEHVAQLFEEYGSSIWWERDAKDLLPEGFTHPGSPNGEFKKETDIMDVWFDSGSSWNGVVVNRPELTYPADLYLEGSDQYRGWFNSSLITSVANHGVAPYKQILSQGFALDGKGEKMSKSLGNTIAPSDVEKQFGAEILRLWVTSVDSSNDVRISMDILSQVSETYRKIRNTLRFLIANTSDFNPAQDTVAYDELRSVDKYMTIRFNQLVKTIRDAYADFEFLTIYKALVNFINVDLSAFYLDFAKDVVYIEGAKSLERRQMQTVFYDILVKITKLLTPILPHTAEEIWSYLEFETEDFVQLSELPEVQTFANQEEILDTWAAFMDFRGQAQKALEEARNAKVIGKSLEAHLTVYPNEVVKTLLEAVNSNVAQLLIVSELTIAEGPAPEAALSFEDVAFTVERATGEVCDRCRRIDPTTAERSYQAVICDHCASIVEENFAEAVAEGFEEK.

Positions 57 to 67 (PYANGNIHVGH) match the 'HIGH' region motif. Glu-554 is an L-isoleucyl-5'-AMP binding site. Residues 595 to 599 (KMSKS) carry the 'KMSKS' region motif. Lys-598 serves as a coordination point for ATP. The Zn(2+) site is built by Cys-888, Cys-891, Cys-908, and Cys-911.

Belongs to the class-I aminoacyl-tRNA synthetase family. IleS type 1 subfamily. As to quaternary structure, monomer. Zn(2+) is required as a cofactor.

Its subcellular location is the cytoplasm. It catalyses the reaction tRNA(Ile) + L-isoleucine + ATP = L-isoleucyl-tRNA(Ile) + AMP + diphosphate. Its function is as follows. Catalyzes the attachment of isoleucine to tRNA(Ile). As IleRS can inadvertently accommodate and process structurally similar amino acids such as valine, to avoid such errors it has two additional distinct tRNA(Ile)-dependent editing activities. One activity is designated as 'pretransfer' editing and involves the hydrolysis of activated Val-AMP. The other activity is designated 'posttransfer' editing and involves deacylation of mischarged Val-tRNA(Ile). This chain is Isoleucine--tRNA ligase, found in Streptococcus pneumoniae serotype 4 (strain ATCC BAA-334 / TIGR4).